Consider the following 262-residue polypeptide: Methionine-rich nacre protein (262 aa).

The first 22 residues, 1–22 (MSIMRRILCLAVVIFIINDVSS), serve as a signal peptide directing secretion. The segment covering 26–35 (GNNKNWKKNG) has biased composition (low complexity). Residues 26–84 (GNNKNWKKNGMSLSSPGNKKPTGNNAVPQKSKMNNMNQNSLSQPKRSSPPGNSMYNMAN) form a disordered region. Positions 36–84 (MSLSSPGNKKPTGNNAVPQKSKMNNMNQNSLSQPKRSSPPGNSMYNMAN) are enriched in polar residues.

As to expression, expressed in mantle and, after secretion, incorporated into acid-insoluble nacre matrix of the shell (at protein level). Expressed primarily in the mantle with highest level in the mantle pallium and lower level in the mantle edge.

The protein resides in the secreted. The protein is Methionine-rich nacre protein of Pinctada maxima (Silver-lipped pearl oyster).